The primary structure comprises 304 residues: Homoserine kinase (304 aa).

ATP is bound at residue 90–100 (PLARGLGSSAS).

It belongs to the GHMP kinase family. Homoserine kinase subfamily.

It localises to the cytoplasm. The catalysed reaction is L-homoserine + ATP = O-phospho-L-homoserine + ADP + H(+). The protein operates within amino-acid biosynthesis; L-threonine biosynthesis; L-threonine from L-aspartate: step 4/5. Its function is as follows. Catalyzes the ATP-dependent phosphorylation of L-homoserine to L-homoserine phosphate. This is Homoserine kinase from Staphylococcus aureus (strain bovine RF122 / ET3-1).